Reading from the N-terminus, the 284-residue chain is Bifunctional protein FolD (284 aa).

Residues 166-168 and isoleucine 232 contribute to the NADP(+) site; that span reads GAS.

The protein belongs to the tetrahydrofolate dehydrogenase/cyclohydrolase family. Homodimer.

The catalysed reaction is (6R)-5,10-methylene-5,6,7,8-tetrahydrofolate + NADP(+) = (6R)-5,10-methenyltetrahydrofolate + NADPH. It catalyses the reaction (6R)-5,10-methenyltetrahydrofolate + H2O = (6R)-10-formyltetrahydrofolate + H(+). It participates in one-carbon metabolism; tetrahydrofolate interconversion. Its function is as follows. Catalyzes the oxidation of 5,10-methylenetetrahydrofolate to 5,10-methenyltetrahydrofolate and then the hydrolysis of 5,10-methenyltetrahydrofolate to 10-formyltetrahydrofolate. The chain is Bifunctional protein FolD from Pseudomonas paraeruginosa (strain DSM 24068 / PA7) (Pseudomonas aeruginosa (strain PA7)).